A 195-amino-acid chain; its full sequence is dCTP deaminase (195 aa).

DCTP is bound by residues 105–110 (RSSLGR), Asp123, 131–133 (TLE), Gln152, Tyr166, Lys173, and Gln177. The active-site Proton donor/acceptor is Glu133. A disordered region spans residues 159-195 (KTPADRPYGAERGSKYQGQSGPQASKIQGDREFGGDQ). Positions 160–172 (TPADRPYGAERGS) are enriched in basic and acidic residues. Residues 174–184 (YQGQSGPQASK) show a composition bias toward polar residues. The segment covering 186 to 195 (QGDREFGGDQ) has biased composition (basic and acidic residues).

The protein belongs to the dCTP deaminase family. Homotrimer.

It catalyses the reaction dCTP + H2O + H(+) = dUTP + NH4(+). Its pathway is pyrimidine metabolism; dUMP biosynthesis; dUMP from dCTP (dUTP route): step 1/2. In terms of biological role, catalyzes the deamination of dCTP to dUTP. This Haloarcula marismortui (strain ATCC 43049 / DSM 3752 / JCM 8966 / VKM B-1809) (Halobacterium marismortui) protein is dCTP deaminase.